Consider the following 904-residue polypeptide: Dynamin-like protein C (904 aa).

The stretch at Ile-44–Leu-102 forms a coiled coil. The disordered stretch occupies residues His-53–Ser-93. Residues Arg-67–Asp-90 show a composition bias toward basic and acidic residues. One can recognise a Dynamin-type G domain in the interval Ser-119 to Pro-441. A G1 motif region spans residues Gly-129–Ser-136. Gly-129–Ser-136 contributes to the GTP binding site. Residues Gly-155–Arg-157 form a G2 motif region. Residues Ser-169–Lys-227 form a disordered region. The segment covering Ser-183–Ser-213 has biased composition (low complexity). Residues Asp-278–Gly-281 form a G3 motif region. GTP-binding positions include Asp-278–Phe-282 and Thr-343–Asp-346. The G4 motif stretch occupies residues Thr-343–Asp-346. The G5 motif stretch occupies residues Leu-378–Lys-381. Residues Glu-781–Phe-811 adopt a coiled-coil conformation. Disordered stretches follow at residues Ser-821–Ser-840 and Asn-853–Asn-904. The span at Asn-853–Ser-876 shows a compositional bias: polar residues. A compositionally biased stretch (low complexity) spans Asn-877–Gln-891.

The protein belongs to the TRAFAC class dynamin-like GTPase superfamily. Dynamin/Fzo/YdjA family.

Its subcellular location is the cytoplasm. The enzyme catalyses GTP + H2O = GDP + phosphate + H(+). Functionally, involved in cytokinesis. May hydrolyze GTP. This chain is Dynamin-like protein C (dlpC), found in Dictyostelium discoideum (Social amoeba).